Consider the following 224-residue polypeptide: Myogenin (224 aa).

Residues S77 and S79 each carry the phosphoserine; by CaMK2G modification. The region spanning 81-132 (DRRRAATLREKRRLKKVNEAFEALKRSTLLNPNQRLPKVEILRSAIQYIERL) is the bHLH domain. T87 bears the Phosphothreonine; by CaMK2G mark.

In terms of assembly, homodimer and heterodimer with E12; heterodimerization enhances MYOG DNA-binding and transcriptional activities. Interacts with SMARCA4/BRG1/BAF190A. Interacts (via C-terminal region) with SSRP1 and SUPT16H; the interaction is indicative of an interaction with the FACT complex. nteracts with CSRP3. Phosphorylated by CAMK2G on threonine and serine amino acids in a muscle activity-dependent manner. Phosphorylation of Thr-87 impairs both DNA-binding and trans-activation functions in contracting muscles. As to expression, expressed in myoblast cells. Expressed weakly in myotubes (at protein level). Expressed strongly in denervated muscles and in satellite cells isolated from denervated muscles. Expressed weakly in innervated muscle and in satellite cells isolated from innervated muscles.

The protein localises to the nucleus. In terms of biological role, acts as a transcriptional activator that promotes transcription of muscle-specific target genes and plays a role in muscle differentiation, cell cycle exit and muscle atrophy. Essential for the development of functional embryonic skeletal fiber muscle differentiation. However is dispensable for postnatal skeletal muscle growth; phosphorylation by CAMK2G inhibits its transcriptional activity in respons to muscle activity. Required for the recruitment of the FACT complex to muscle-specific promoter regions, thus promoting gene expression initiation. During terminal myoblast differentiation, plays a role as a strong activator of transcription at loci with an open chromatin structure previously initiated by MYOD1. Together with MYF5 and MYOD1, co-occupies muscle-specific gene promoter core regions during myogenesis. Also cooperates with myocyte-specific enhancer factor MEF2D and BRG1-dependent recruitment of SWI/SNF chromatin-remodeling enzymes to alter chromatin structure at myogenic late gene promoters. Facilitates cell cycle exit during terminal muscle differentiation through the up-regulation of miR-20a expression, which in turn represses genes involved in cell cycle progression. Binds to the E-box containing (E1) promoter region of the miR-20a gene. Also plays a role in preventing reversal of muscle cell differentiation. Contributes to the atrophy-related gene expression in adult denervated muscles. Induces fibroblasts to differentiate into myoblasts. The polypeptide is Myogenin (Myog) (Mus musculus (Mouse)).